The chain runs to 272 residues: Prephenate dehydratase (272 aa).

The region spanning 4-179 (AVIYTLPKGT…NKTRFILIGK (176 aa)) is the Prephenate dehydratase domain. An ACT domain is found at 194–269 (IVFELKEDKP…TFINLLGKYP (76 aa)).

In terms of assembly, homodimer.

The enzyme catalyses prephenate + H(+) = 3-phenylpyruvate + CO2 + H2O. It participates in amino-acid biosynthesis; L-phenylalanine biosynthesis; phenylpyruvate from prephenate: step 1/1. Its activity is regulated as follows. Inhibited by L-phenylalanine but not by L-tyrosine or L-tryptophan. The sequence is that of Prephenate dehydratase (pheA) from Methanocaldococcus jannaschii (strain ATCC 43067 / DSM 2661 / JAL-1 / JCM 10045 / NBRC 100440) (Methanococcus jannaschii).